The following is a 200-amino-acid chain: Casparian strip membrane protein 1 (200 aa).

The Cytoplasmic segment spans residues 1–38 (MKSGDHAAIDVPESSAVAKGKAPLIATPREQKSGFKKG). A helical transmembrane segment spans residues 39–59 (LGIFDFLLRLGAIIAALAAAA). The Extracellular segment spans residues 60-86 (TMGTSDETLPFFTQFFQFEASYDDLPT). A helical transmembrane segment spans residues 87-107 (FMFFVIAMALIGGYLVLSLPF). Residues 108-121 (SIVTIVRPHAVAPR) are Cytoplasmic-facing. The chain crosses the membrane as a helical span at residues 122-142 (LLLFILDIVALTLTTAAGAAA). Residues 143 to 171 (AAIVYLAHNGNPNTNWLAICQQFGDFCQE) are Extracellular-facing. The helical transmembrane segment at 172–192 (VSGAVVASFVTVVVLMSLVLL) threads the bilayer. Residues 193–200 (SGVALKKH) lie on the Cytoplasmic side of the membrane.

It belongs to the Casparian strip membrane proteins (CASP) family. As to quaternary structure, homodimer and heterodimers.

The protein resides in the cell membrane. Functionally, regulates membrane-cell wall junctions and localized cell wall deposition. Required for establishment of the Casparian strip membrane domain (CSD) and the subsequent formation of Casparian strips, a cell wall modification of the root endodermis that determines an apoplastic barrier between the intraorganismal apoplasm and the extraorganismal apoplasm and prevents lateral diffusion. This chain is Casparian strip membrane protein 1, found in Theobroma cacao (Cacao).